A 30-amino-acid chain; its full sequence is MIYDSQVYTVLLIALLASVLAIRLGSTLYQ.

Residues 7–29 (VYTVLLIALLASVLAIRLGSTLY) form a helical membrane-spanning segment.

This sequence belongs to the PsaM family.

Its subcellular location is the plastid. The protein resides in the chloroplast thylakoid membrane. In Trieres chinensis (Marine centric diatom), this protein is Photosystem I reaction center subunit XII.